Reading from the N-terminus, the 166-residue chain is Small ribosomal subunit protein uS5 (166 aa).

One can recognise an S5 DRBM domain in the interval 12–75 (YIEKLVQVNR…EAARRNMIQV (64 aa)).

It belongs to the universal ribosomal protein uS5 family. In terms of assembly, part of the 30S ribosomal subunit. Contacts proteins S4 and S8.

Functionally, with S4 and S12 plays an important role in translational accuracy. Its function is as follows. Located at the back of the 30S subunit body where it stabilizes the conformation of the head with respect to the body. The polypeptide is Small ribosomal subunit protein uS5 (Azotobacter vinelandii (strain DJ / ATCC BAA-1303)).